The sequence spans 585 residues: uncharacterized protein (585 aa).

The next 6 membrane-spanning stretches (helical) occupy residues 18–38 (FMWSLLAMLLMTAITVVYPII), 55–75 (AAWVSLGFIAVMVLKGMATFF), 128–148 (FFLSYGLAELIRFGLLVAISL), 150–170 (VMFYYSVPLTLVTIAVLPFLA), 238–258 (IWSAYFPLMEFIGNTCIVALL), and 276–296 (VAFFSLVNYMMWPIMNLGFVI). The ABC transmembrane type-1 domain occupies 18-301 (FMWSLLAMLL…LGFVINMFSQ (284 aa)). Residues 335–570 (VHFKNVSLAY…GGYYKKIYDL (236 aa)) enclose the ABC transporter domain. 369 to 376 (GPTGSGKS) contacts ATP.

It belongs to the ABC transporter superfamily.

It is found in the cell membrane. This is an uncharacterized protein from Bacillus subtilis (strain 168).